We begin with the raw amino-acid sequence, 306 residues long: Tyrosine recombinase EUBREC_2677 (306 aa).

A Core-binding (CB) domain is found at 2–84 (NNLQTHISSY…SIKAFFHYLE (83 aa)). The 191-residue stretch at 106–296 (ILPKTIPLYI…AVSKQKDILI (191 aa)) folds into the Tyr recombinase domain. Catalysis depends on residues R155, K179, H248, R251, and H274. The active-site O-(3'-phospho-DNA)-tyrosine intermediate is Y283.

Belongs to the 'phage' integrase family.

It is found in the cytoplasm. Site-specific tyrosine recombinase, which acts by catalyzing the cutting and rejoining of the recombining DNA molecules. This Agathobacter rectalis (strain ATCC 33656 / DSM 3377 / JCM 17463 / KCTC 5835 / VPI 0990) (Eubacterium rectale) protein is Tyrosine recombinase EUBREC_2677.